Consider the following 513-residue polypeptide: Sugar transport protein MST8 (513 aa).

At Met1–Pro17 the chain is on the cytoplasmic side. The helical transmembrane segment at Gly18 to Phe38 threads the bilayer. Over Gly39–Glu81 the chain is Extracellular. The helical transmembrane segment at Leu82 to Ser102 threads the bilayer. At Val103–Gly116 the chain is on the cytoplasmic side. The chain crosses the membrane as a helical span at residues Gly117–Leu137. Residues Ile138 to Ile139 lie on the Extracellular side of the membrane. A helical membrane pass occupies residues Gly140–Ser160. Residues Glu161–Arg166 lie on the Cytoplasmic side of the membrane. The helical transmembrane segment at Met167 to Asn187 threads the bilayer. Topologically, residues Leu188–Gly201 are extracellular. Residues Trp202–Phe222 form a helical membrane-spanning segment. The Cytoplasmic segment spans residues Leu223–Leu294. Residues Gln295–Gly315 traverse the membrane as a helical segment. The Extracellular segment spans residues Phe316–Ala320. The helical transmembrane segment at Ser321–Ala341 threads the bilayer. Topologically, residues Thr342–Gly347 are cytoplasmic. A helical membrane pass occupies residues Arg348–Thr368. Residues Leu369–Gly385 are Extracellular-facing. Residues Tyr386 to Gly406 form a helical membrane-spanning segment. Over Pro407 to Ala425 the chain is Cytoplasmic. Residues Gln426–Met446 form a helical membrane-spanning segment. Residues Met447 to His450 are Extracellular-facing. A helical membrane pass occupies residues Leu451–Phe471. Residues Phe472–Thr512 lie on the Cytoplasmic side of the membrane.

The protein belongs to the major facilitator superfamily. Sugar transporter (TC 2.A.1.1) family. As to expression, expressed specifically in anthers.

Its subcellular location is the membrane. Its function is as follows. Mediates active uptake of hexoses by sugar:proton symport. May play an important role in transporting monosaccharides during anther development. The polypeptide is Sugar transport protein MST8 (Oryza sativa subsp. japonica (Rice)).